The following is a 254-amino-acid chain: 3-deoxy-manno-octulosonate cytidylyltransferase (254 aa).

It belongs to the KdsB family.

It is found in the cytoplasm. It catalyses the reaction 3-deoxy-alpha-D-manno-oct-2-ulosonate + CTP = CMP-3-deoxy-beta-D-manno-octulosonate + diphosphate. It functions in the pathway nucleotide-sugar biosynthesis; CMP-3-deoxy-D-manno-octulosonate biosynthesis; CMP-3-deoxy-D-manno-octulosonate from 3-deoxy-D-manno-octulosonate and CTP: step 1/1. The protein operates within bacterial outer membrane biogenesis; lipopolysaccharide biosynthesis. Activates KDO (a required 8-carbon sugar) for incorporation into bacterial lipopolysaccharide in Gram-negative bacteria. The sequence is that of 3-deoxy-manno-octulosonate cytidylyltransferase from Pseudomonas aeruginosa (strain UCBPP-PA14).